The chain runs to 749 residues: Patatin-like phospholipase domain-containing protein AN0408 (749 aa).

The segment covering 1–11 (MEKSAAGDNID) has biased composition (basic and acidic residues). Residues 1–21 (MEKSAAGDNIDKYSPSSIPDY) are disordered. A helical transmembrane segment spans residues 92-112 (WPFLLFVLGWITFLSVGYALT). The PNPLA domain occupies 280–471 (LCLSGGATFA…RTDIPIKALN (192 aa)). The GXSXG signature appears at 311–315 (GTSGG). The Nucleophile role is filled by Ser313. Asp458 acts as the Proton acceptor in catalysis. The segment at 630 to 659 (SIQPFPFDNGAAGADQKSNDPREERLNRNF) is disordered. Basic and acidic residues predominate over residues 646-659 (KSNDPREERLNRNF).

This sequence belongs to the PLPL family.

The protein resides in the membrane. Functionally, probable lipid hydrolase. The protein is Patatin-like phospholipase domain-containing protein AN0408 of Emericella nidulans (strain FGSC A4 / ATCC 38163 / CBS 112.46 / NRRL 194 / M139) (Aspergillus nidulans).